Here is a 357-residue protein sequence, read N- to C-terminus: THUMP domain-containing protein 1 (357 aa).

Residues methionine 1–glutamine 10 are compositionally biased toward polar residues. Disordered stretches follow at residues methionine 1 to glutamine 38 and glycine 74 to valine 95. Position 2 is an N-acetylalanine (alanine 2). 4 positions are modified to phosphoserine: serine 8, serine 86, serine 88, and serine 119. The 108-residue stretch at aspartate 147 to lysine 254 folds into the THUMP domain. At serine 270 the chain carries Phosphoserine. Composition is skewed to polar residues over residues glutamine 276–asparagine 287 and lysine 298–proline 315. The segment at glutamine 276–leucine 357 is disordered.

This sequence belongs to the THUMPD1 family. Interacts with NAT10. Binds tRNA.

Functionally, functions as a tRNA-binding adapter to mediate NAT10-dependent tRNA acetylation modifying cytidine to N4-acetylcytidine (ac4C). The chain is THUMP domain-containing protein 1 (THUMPD1) from Bos taurus (Bovine).